We begin with the raw amino-acid sequence, 1608 residues long: Hemolysin (1608 aa).

The N-terminal stretch at 1-30 (MKNNNFRLSAAGKLAAALAIILAASAGAYA) is a signal peptide. Disordered regions lie at residues 296–315 (SRVDDASSNKNGGDNYQNYR), 452–488 (KSSERGYQRNHTSSLRTGRWSNSDESESLKASELRSE), 716–737 (EHTRDSEKTTRTENSASSLSGG), 971–1030 (AVNL…SASQ), 1168–1199 (AESTQTRKESKLSGNIDLGAGSSDSKEKTGGN), and 1437–1469 (PQQDTTGAVSFSKAEGKVTLPATPAGEKPQGPL). Composition is skewed to polar residues over residues 303–313 (SNKNGGDNYQN) and 460–474 (RNHTSSLRTGRWSNS). 2 stretches are compositionally biased toward basic and acidic residues: residues 478 to 488 (ESLKASELRSE) and 716 to 726 (EHTRDSEKTTR). A compositionally biased stretch (polar residues) spans 727–736 (TENSASSLSG). Over residues 977–996 (DSHRSEAAANRQDEQSRDTR) the composition is skewed to basic and acidic residues. The span at 1021 to 1030 (TQRSNSSASQ) shows a compositional bias: polar residues.

It localises to the cell outer membrane. Functionally, bacterial hemolysins are exotoxins that attack blood cell membranes and cause cell rupture by mechanisms not clearly defined. Cell-bound hemolysin, which releases heme-iron from erythrocytes by interaction with the erythrocyte membrane. ShlA requires ShlB function. In Serratia marcescens, this protein is Hemolysin (shlA).